Here is a 325-residue protein sequence, read N- to C-terminus: Probable arylamine N-acetyltransferase 1 (325 aa).

Cysteine 72 functions as the Acyl-thioester intermediate in the catalytic mechanism. Residues histidine 112 and aspartate 127 contribute to the active site.

This sequence belongs to the arylamine N-acetyltransferase family.

The catalysed reaction is an arylamine + acetyl-CoA = an N-acetylarylamine + CoA. The sequence is that of Probable arylamine N-acetyltransferase 1 from Dictyostelium discoideum (Social amoeba).